Reading from the N-terminus, the 358-residue chain is S-adenosylmethionine:tRNA ribosyltransferase-isomerase (358 aa).

It belongs to the QueA family. As to quaternary structure, monomer.

Its subcellular location is the cytoplasm. It catalyses the reaction 7-aminomethyl-7-carbaguanosine(34) in tRNA + S-adenosyl-L-methionine = epoxyqueuosine(34) in tRNA + adenine + L-methionine + 2 H(+). The protein operates within tRNA modification; tRNA-queuosine biosynthesis. In terms of biological role, transfers and isomerizes the ribose moiety from AdoMet to the 7-aminomethyl group of 7-deazaguanine (preQ1-tRNA) to give epoxyqueuosine (oQ-tRNA). This is S-adenosylmethionine:tRNA ribosyltransferase-isomerase from Rhodopseudomonas palustris (strain BisA53).